An 82-amino-acid chain; its full sequence is Savignygrin (-) (82 aa).

Positions 1-21 (MQANIFVFAFLLLSVAVAAYG) are cleaved as a signal peptide. Cystine bridges form between Cys26–Cys79, Cys34–Cys59, and Cys53–Cys75. The Cell attachment site signature appears at 35–37 (RGD).

Expressed in salivary glands.

The protein localises to the cytoplasmic vesicle. It is found in the secretory vesicle. Its subcellular location is the secreted. Functionally, tick salivary platelet aggregation inhibitor that plays an important part in the anti-hemostatic strategy of ticks. Inhibits platelet aggregation induced by ADP (IC(50)=130 nM), collagen, the thrombin receptor-activating peptide, and epinephrine, although platelets are activated and their shape changed. Binding to platelets is similar for resting and activated platelets (Kd=50-70 nM). Acts by specifically binding to platelet membrane glycoprotein IIb-IIIa (ITGA2B/ITGB3) in a divalent metal ion dependent manner. In contrast to many disintegrins which only interacts with the beta-3 subunit, this protein interacts with the two subunits (alpha-IIb and beta-3). Also causes disaggregation of aggregated platelets without influencing the activated spherical shape associated with aggregated platelets and causes a decrease in the number of pseudopodia on the activated platelet surface. Does not show any inhibitory activity for the different serine proteases tested. This Ornithodoros kalahariensis (Tick) protein is Savignygrin (-).